A 792-amino-acid chain; its full sequence is MLDLSDGCSAGGTDMVTRLLADLGADVLKVEPPGGSPGRHVRPTLAGTSIGFAMHNANKRSAVLNPLDESDRRRFLDLAASADIVVDCGLPGQAAAYGASCAELADRYRHLVALSITDFGAAGPRSSWRATDPVLYAMSGALSRSGPTAGTPVLPPDGIASATAAVQAAWAVLVAYFNRLRCGTGDYIDFSRFDAVVMALDPPFGAHGQVAAGIRSTGRWRGRPKNQDAYPIYPCRDGYVRFCVMAPRQWRGLRRWLGEPEDFQDPKYDVIGARLAAWPQISVLVAKLCAEKTMKELVAAGQALGVPITAVLTPSRILASEHFQAVGAITDAELVPGVRTGVPTGYFVVDGKRAGFRTPAPAAGQDEPRWLADPAPVPPPSGRVGGYPFEGLRILDLGIIVAGGELSRLFGDLGAEVIKVESADHPDGLRQTRVGDAMSESFAWTHRNHLALGLDLRNSEGKAIFGRLVAESDAVFANFKPGTLTSLGFSYDVLHAFNPRIVLAGSSAFGNRGPWSTRMGYGPLVRAATGVTRVWTSDEAQPDNSRHPFYDATTIFPDHVVGRVGALLALAALIHRDRTGGGAHVHISQAEVVVNQLDTMFVAEAARATDVAEIHPDTSVHAVYPCAGDDEWCVISIRSDDEWRRATSVFGQPELANDPRFGASRSRVANRSELVAAVSAWTSTRTPVQAAGALQAAGVAAGPMNRPSDILEDPQLIERNLFRDMVHPLIARPLPAETGPAPFRHIPQAPQRPAPLPGQDSVQICRKLLGMTADETERLINERVMFGPAVTA.

Catalysis depends on D558, which acts as the Nucleophile.

This sequence belongs to the CoA-transferase III family.

Probable CoA-transferase. This Mycobacterium tuberculosis (strain ATCC 25618 / H37Rv) protein is Probable CoA-transferase Rv1866.